Reading from the N-terminus, the 208-residue chain is Segregation and condensation protein B (208 aa).

This sequence belongs to the ScpB family. In terms of assembly, homodimer. Homodimerization may be required to stabilize the binding of ScpA to the Smc head domains. Component of a cohesin-like complex composed of ScpA, ScpB and the Smc homodimer, in which ScpA and ScpB bind to the head domain of Smc. The presence of the three proteins is required for the association of the complex with DNA.

It is found in the cytoplasm. Functionally, participates in chromosomal partition during cell division. May act via the formation of a condensin-like complex containing Smc and ScpA that pull DNA away from mid-cell into both cell halves. The sequence is that of Segregation and condensation protein B from Mycoplasma pneumoniae (strain ATCC 29342 / M129 / Subtype 1) (Mycoplasmoides pneumoniae).